Here is a 564-residue protein sequence, read N- to C-terminus: Potassium-transporting ATPase potassium-binding subunit (564 aa).

The next 10 helical transmembrane spans lie at 7 to 27, 67 to 87, 135 to 155, 179 to 199, 258 to 278, 286 to 306, 382 to 402, 420 to 440, 487 to 507, and 528 to 548; these read LLIL…GRFF, AWAL…MLML, VGLT…LVAL, LYAL…QGVP, FELV…GHYV, AILG…LWAE, VGLN…GLMI, LLVA…AIAA, LMLS…VLAL, and GLLF…LTFL.

The protein belongs to the KdpA family. In terms of assembly, the system is composed of three essential subunits: KdpA, KdpB and KdpC.

It is found in the cell inner membrane. Functionally, part of the high-affinity ATP-driven potassium transport (or Kdp) system, which catalyzes the hydrolysis of ATP coupled with the electrogenic transport of potassium into the cytoplasm. This subunit binds the periplasmic potassium ions and delivers the ions to the membrane domain of KdpB through an intramembrane tunnel. This chain is Potassium-transporting ATPase potassium-binding subunit, found in Pseudomonas syringae pv. tomato (strain ATCC BAA-871 / DC3000).